Reading from the N-terminus, the 467-residue chain is Glutamate--tRNA ligase (467 aa).

Residues 9-19 (PSPTGYLHIGG) carry the 'HIGH' region motif. The 'KMSKS' region motif lies at 237 to 241 (KLSKR). Lysine 240 lines the ATP pocket.

This sequence belongs to the class-I aminoacyl-tRNA synthetase family. Glutamate--tRNA ligase type 1 subfamily. In terms of assembly, monomer.

The protein localises to the cytoplasm. The enzyme catalyses tRNA(Glu) + L-glutamate + ATP = L-glutamyl-tRNA(Glu) + AMP + diphosphate. In terms of biological role, catalyzes the attachment of glutamate to tRNA(Glu) in a two-step reaction: glutamate is first activated by ATP to form Glu-AMP and then transferred to the acceptor end of tRNA(Glu). The chain is Glutamate--tRNA ligase from Xylella fastidiosa (strain M12).